A 147-amino-acid polypeptide reads, in one-letter code: Hemoglobin subunit delta (147 aa).

Residues 3–147 (HLTGEEKAAV…VANALAHKYH (145 aa)) form the Globin domain. 2 residues coordinate heme b: His-64 and His-93.

Belongs to the globin family. In terms of assembly, heterotetramer of two delta chains and two alpha chains. Red blood cells.

The sequence is that of Hemoglobin subunit delta (HBD) from Ailuropoda melanoleuca (Giant panda).